We begin with the raw amino-acid sequence, 3414 residues long: Genome polyprotein (3414 aa).

The tract at residues 1–30 (MVKKAILKGKGGGPPRRVSKETATKTRQPR) is disordered. Residues 2-98 (VKKAILKGKG…LQKRGKRRSA (97 aa)) lie on the Cytoplasmic side of the membrane. The propeptide at 97–117 (SATDWMSWLLVITLLGMTLAA) is ER anchor for the capsid protein C, removed in mature form by serine protease NS3. A helical transmembrane segment spans residues 99 to 119 (TDWMSWLLVITLLGMTLAATV). Topologically, residues 120 to 242 (RKERDGSTVI…HLTRVEGWVW (123 aa)) are extracellular. Asn144 is a glycosylation site (N-linked (GlcNAc...) asparagine; by host). The helical transmembrane segment at 243–260 (KNKLLALAMVTVVWLTLE) threads the bilayer. Ser261 is a topological domain (cytoplasmic). The chain crosses the membrane as a helical span at residues 262 to 280 (VVTRVAVLVVLLCLAPVYA). Over 281–727 (SRCTHLENRD…HTVLGGAFNS (447 aa)) the chain is Extracellular. 6 cysteine pairs are disulfide-bonded: Cys283/Cys310, Cys340/Cys396, Cys340/Cys401, Cys354/Cys385, Cys372/Cys396, and Cys372/Cys401. A fusion peptide region spans residues 378–391 (DRGWGNHCGLFGKG). Asn434 carries N-linked (GlcNAc...) asparagine; by host glycosylation. Disulfide bonds link Cys466/Cys570 and Cys587/Cys618. The chain crosses the membrane as a helical span at residues 728 to 748 (IFGGVGFLPKLLLGVALAWLG). Topologically, residues 749-755 (LNMRNPT) are extracellular. A helical transmembrane segment spans residues 756–776 (MSMSFLLAGGLVLAMTLGVGA). Topologically, residues 777 to 1132 (DVGCAVDTER…RSMVVADNGE (356 aa)) are extracellular. Cystine bridges form between Cys780–Cys791, Cys831–Cys920, Cys955–Cys1000, Cys1057–Cys1106, Cys1068–Cys1090, and Cys1089–Cys1093. N-linked (GlcNAc...) asparagine; by host glycans are attached at residues Asn861, Asn983, and Asn999. A helical membrane pass occupies residues 1133-1153 (LLSEGGVPGIVALFVVLEYII). Residues 1154–1158 (RRRPS) lie on the Cytoplasmic side of the membrane. The helical transmembrane segment at 1159 to 1179 (TGTTVVWGGIVVLALLVTGMV) threads the bilayer. Over 1180 to 1187 (RIESLVRY) the chain is Lumenal. Residues 1188–1208 (VVAVGITFHLELGPEIVALML) form a helical membrane-spanning segment. Topologically, residues 1209–1293 (LQAVFELRVG…LLMALMTQQD (85 aa)) are cytoplasmic. The helical transmembrane segment at 1294-1314 (VVTVHHGLVCFLSVASACSVW) threads the bilayer. Over 1315-1327 (RLLKGHREQKGLT) the chain is Lumenal. Residues 1328–1348 (WVVPLAGLLGGEGSGIRLLAF) traverse the membrane as a helical segment. Over 1349–1359 (WELSAHRGRRS) the chain is Cytoplasmic. Residues 1360–1378 (FSEPLTVVGVMLTLASGMM) form a helical membrane-spanning segment. The Lumenal segment spans residues 1379–1382 (RHTS). Residues 1383 to 1403 (QEALCALAVASFLLLMLVLGT) form a helical membrane-spanning segment. Residues 1404-1454 (RKMQLVAEWSGCVEWYPELVNEGGEVSLRVRQDAMGNFHLTELEKEERMMA) are Cytoplasmic-facing. The segment at 1410–1449 (AEWSGCVEWYPELVNEGGEVSLRVRQDAMGNFHLTELEKE) is interacts with and activates NS3 protease. Positions 1455 to 1475 (FWLIAGLAASAIHWSGILGVM) form an intramembrane region, helical. Over 1476–2160 (GLWTLTEMLR…RMAERDAPEA (685 aa)) the chain is Cytoplasmic. A Peptidase S7 domain is found at 1490–1669 (SDLVFSGQGG…EAEKSRPNLP (180 aa)). Residues His1543, Asp1567, and Ser1627 each act as charge relay system; for serine protease NS3 activity in the active site. Positions 1675–1831 (TGWTSKGQIT…ESNGAITSEE (157 aa)) constitute a Helicase ATP-binding domain. 1688 to 1695 (MHPGSGKT) contacts ATP. The DEAH box motif lies at 1779–1782 (DEAH). The Helicase C-terminal domain occupies 1841–2000 (DGFDWITEYE…TLRGPVATFY (160 aa)). N6-acetyllysine; by host is present on Lys1883. Residues 2161–2181 (FLTMVEMMVLGLATLGVIWCF) traverse the membrane as a helical segment. Residues 2182–2189 (VVRTSISR) are Lumenal-facing. An intramembrane region (helical) is located at residues 2190–2210 (MMLGTLVLLASLLLLWAGGVG). Residue Tyr2211 is a topological domain, lumenal. A helical transmembrane segment spans residues 2212–2232 (GNMAGVALIFYTLLTVLQPEA). Over 2233 to 2244 (GKQRSSDDNKLA) the chain is Cytoplasmic. Residues 2245-2265 (YFLLTLCSLAGLVAANEMGFL) form a helical membrane-spanning segment. Over 2266–2299 (EKTKADLSTALWSEREEPRPWSEWTNVDIQPARS) the chain is Lumenal. The helical intramembrane region spans 2300 to 2320 (WGTYVLVVSLFTPYIIHQLQT). Residues 2321-2343 (KIQQLVNSAVASGAQAMRDLGGG) are Lumenal-facing. Positions 2344-2364 (APFFGVAGHVMTLGVVSLIGA) form an intramembrane region, helical. The Lumenal portion of the chain corresponds to 2365 to 2368 (TPTS). Residues 2369–2389 (LMVGVGLAALHLAIVVSGLEA) form a helical membrane-spanning segment. Topologically, residues 2390–2432 (ELTQRAHKVFFSAMVRNPMVDGDVINPFGEGEAKPALYERKMS) are cytoplasmic. The chain crosses the membrane as a helical span at residues 2433–2453 (LVLATVLCLMSVVMNRTVASI). Topologically, residues 2454–2477 (TEASAVGLAAAGQLLRPEADTLWT) are lumenal. The chain crosses the membrane as a helical span at residues 2478–2498 (MPVACGMSGVVRGSLWGFLPL). Over 2499-3414 (GHRLWLRASG…WELRLESSII (916 aa)) the chain is Cytoplasmic. The mRNA cap 0-1 NS5-type MT domain maps to 2512 to 2776 (GGSEGDTLGD…ELDLGVGTRC (265 aa)). Ser2567 lines the S-adenosyl-L-methionine pocket. Ser2567 bears the Phosphoserine mark. Lys2572 serves as the catalytic For 2'-O-MTase activity. Gly2597, Trp2598, Thr2615, Ile2616, Asp2642, and Val2643 together coordinate S-adenosyl-L-methionine. The active-site For 2'-O-MTase activity is the Asp2657. Ile2658 serves as a coordination point for S-adenosyl-L-methionine. Residues Lys2694 and Glu2730 each act as for 2'-O-MTase activity in the active site. The segment at 2730 to 2734 (EMYYS) is interaction with host SCRIB. Residue Tyr2732 coordinates S-adenosyl-L-methionine. Zn(2+) contacts are provided by Glu2950, His2954, Cys2959, and Cys2962. In terms of domain architecture, RdRp catalytic spans 3040–3189 (GLFYADDTAG…RPLDDRFGKA (150 aa)). Zn(2+) is bound by residues His3224, Cys3240, and Cys3359.

This sequence in the N-terminal section; belongs to the class I-like SAM-binding methyltransferase superfamily. mRNA cap 0-1 NS5-type methyltransferase family. Homodimer. Interacts (via N-terminus) with host EXOC1 (via C-terminus); this interaction results in EXOC1 degradation through the proteasome degradation pathway. In terms of assembly, forms heterodimers with envelope protein E in the endoplasmic reticulum and Golgi. As to quaternary structure, homodimer; in the endoplasmic reticulum and Golgi. Interacts with protein prM. Interacts with non-structural protein 1. Homodimer; Homohexamer when secreted. Interacts with envelope protein E. In terms of assembly, interacts (via N-terminus) with serine protease NS3. As to quaternary structure, forms a heterodimer with serine protease NS3. May form homooligomers. Forms a heterodimer with NS2B. Interacts with NS4B. Interacts with unphosphorylated RNA-directed RNA polymerase NS5; this interaction stimulates RNA-directed RNA polymerase NS5 guanylyltransferase activity. In terms of assembly, interacts with serine protease NS3. Interacts with NS1. As to quaternary structure, homodimer. Interacts with host STAT2; this interaction inhibits the phosphorylation of the latter, and, when all viral proteins are present (polyprotein), targets STAT2 for degradation. Interacts with serine protease NS3. Interacts with host SCRIB; this interaction targets NS5 to the cell membrane periphery and nucleus, thereby allowing efficient host nuclear STAT1 inhibition. In terms of processing, specific enzymatic cleavages in vivo yield mature proteins. Cleavages in the lumen of endoplasmic reticulum are performed by host signal peptidase, whereas cleavages in the cytoplasmic side are performed by serine protease NS3. Signal cleavage at the 2K-4B site requires a prior NS3 protease-mediated cleavage at the 4A-2K site. Cleaved in post-Golgi vesicles by a host furin, releasing the mature small envelope protein M, and peptide pr. This cleavage is incomplete as up to 30% of viral particles still carry uncleaved prM. Post-translationally, N-glycosylated. In terms of processing, N-glycosylated. The excreted form is glycosylated and this is required for efficient secretion of the protein from infected cells. Acetylated by host KAT5. Acetylation modulates NS3 RNA-binding and unwinding activities and plays an important positive role for viral replication. Post-translationally, phosphorylated on serines residues. This phosphorylation may trigger NS5 nuclear localization.

The protein localises to the virion. It localises to the host nucleus. The protein resides in the host cytoplasm. Its subcellular location is the host perinuclear region. It is found in the secreted. The protein localises to the virion membrane. It localises to the host endoplasmic reticulum membrane. It carries out the reaction Selective hydrolysis of -Xaa-Xaa-|-Yaa- bonds in which each of the Xaa can be either Arg or Lys and Yaa can be either Ser or Ala.. The enzyme catalyses RNA(n) + a ribonucleoside 5'-triphosphate = RNA(n+1) + diphosphate. It catalyses the reaction a ribonucleoside 5'-triphosphate + H2O = a ribonucleoside 5'-diphosphate + phosphate + H(+). The catalysed reaction is ATP + H2O = ADP + phosphate + H(+). It carries out the reaction a 5'-end (5'-triphosphoguanosine)-ribonucleoside in mRNA + S-adenosyl-L-methionine = a 5'-end (N(7)-methyl 5'-triphosphoguanosine)-ribonucleoside in mRNA + S-adenosyl-L-homocysteine. The enzyme catalyses a 5'-end (N(7)-methyl 5'-triphosphoguanosine)-ribonucleoside in mRNA + S-adenosyl-L-methionine = a 5'-end (N(7)-methyl 5'-triphosphoguanosine)-(2'-O-methyl-ribonucleoside) in mRNA + S-adenosyl-L-homocysteine + H(+). Plays a role in virus budding by binding to the cell membrane and gathering the viral RNA into a nucleocapsid that forms the core of a mature virus particle. During virus entry, may induce genome penetration into the host cytoplasm after hemifusion induced by the surface proteins. Can migrate to the cell nucleus where it modulates host functions. Its function is as follows. Inhibits RNA silencing by interfering with host Dicer. In terms of biological role, prevents premature fusion activity of envelope proteins in trans-Golgi by binding to envelope protein E at pH6.0. After virion release in extracellular space, gets dissociated from E dimers. Functionally, acts as a chaperone for envelope protein E during intracellular virion assembly by masking and inactivating envelope protein E fusion peptide. prM is the only viral peptide matured by host furin in the trans-Golgi network probably to avoid catastrophic activation of the viral fusion activity in acidic Golgi compartment prior to virion release. prM-E cleavage is inefficient, and many virions are only partially matured. These uncleaved prM would play a role in immune evasion. May play a role in virus budding. Exerts cytotoxic effects by activating a mitochondrial apoptotic pathway through M ectodomain. May display a viroporin activity. Its function is as follows. Binds to host cell surface receptor and mediates fusion between viral and cellular membranes. Envelope protein is synthesized in the endoplasmic reticulum in the form of heterodimer with protein prM. They play a role in virion budding in the ER, and the newly formed immature particle is covered with 60 spikes composed of heterodimer between precursor prM and envelope protein E. The virion is transported to the Golgi apparatus where the low pH causes dissociation of PrM-E heterodimers and formation of E homodimers. prM-E cleavage is inefficient, and many virions are only partially matured. These uncleaved prM would play a role in immune evasion. In terms of biological role, involved in immune evasion, pathogenesis and viral replication. Once cleaved off the polyprotein, is targeted to three destinations: the viral replication cycle, the plasma membrane and the extracellular compartment. Essential for viral replication. Required for formation of the replication complex and recruitment of other non-structural proteins to the ER-derived membrane structures. Excreted as a hexameric lipoparticle that plays a role against host immune response. Antagonizing the complement function. Binds to the host macrophages and dendritic cells. Inhibits signal transduction originating from Toll-like receptor 3 (TLR3). Functionally, component of the viral RNA replication complex that functions in virion assembly and antagonizes the host immune response. Required cofactor for the serine protease function of NS3. May have membrane-destabilizing activity and form viroporins. Its function is as follows. Displays three enzymatic activities: serine protease, NTPase and RNA helicase. NS3 serine protease, in association with NS2B, performs its autocleavage and cleaves the polyprotein at dibasic sites in the cytoplasm: C-prM, NS2A-NS2B, NS2B-NS3, NS3-NS4A, NS4A-2K and NS4B-NS5. NS3 RNA helicase binds RNA and unwinds dsRNA in the 3' to 5' direction. In terms of biological role, regulates the ATPase activity of the NS3 helicase activity. NS4A allows NS3 helicase to conserve energy during unwinding. Functionally, functions as a signal peptide for NS4B and is required for the interferon antagonism activity of the latter. Induces the formation of ER-derived membrane vesicles where the viral replication takes place. Inhibits interferon (IFN)-induced host STAT1 phosphorylation and nuclear translocation, thereby preventing the establishment of cellular antiviral state by blocking the IFN-alpha/beta pathway. Inhibits STAT2 translocation in the nucleus after IFN-alpha treatment. Its function is as follows. Replicates the viral (+) and (-) genome, and performs the capping of genomes in the cytoplasm. NS5 methylates viral RNA cap at guanine N-7 and ribose 2'-O positions. Besides its role in RNA genome replication, also prevents the establishment of cellular antiviral state by blocking the interferon-alpha/beta (IFN-alpha/beta) signaling pathway. Inhibits host TYK2 and STAT2 phosphorylation, thereby preventing activation of JAK-STAT signaling pathway. This chain is Genome polyprotein, found in Tick-borne encephalitis virus European subtype (strain Neudoerfl) (NEUV).